Consider the following 147-residue polypeptide: 3-dehydroquinate dehydratase (147 aa).

Catalysis depends on tyrosine 23, which acts as the Proton acceptor. Substrate contacts are provided by asparagine 75, histidine 81, and aspartate 88. Residue histidine 101 is the Proton donor of the active site. Residues 102 to 103 (LS) and arginine 112 each bind substrate.

The protein belongs to the type-II 3-dehydroquinase family. Homododecamer.

It carries out the reaction 3-dehydroquinate = 3-dehydroshikimate + H2O. It participates in metabolic intermediate biosynthesis; chorismate biosynthesis; chorismate from D-erythrose 4-phosphate and phosphoenolpyruvate: step 3/7. Its function is as follows. Catalyzes a trans-dehydration via an enolate intermediate. This chain is 3-dehydroquinate dehydratase, found in Thioalkalivibrio sulfidiphilus (strain HL-EbGR7).